Here is a 594-residue protein sequence, read N- to C-terminus: Arginine--tRNA ligase (594 aa).

The 'HIGH' region motif lies at 139–149 (ANPTGPLHVGH).

Belongs to the class-I aminoacyl-tRNA synthetase family. Monomer.

It localises to the cytoplasm. It carries out the reaction tRNA(Arg) + L-arginine + ATP = L-arginyl-tRNA(Arg) + AMP + diphosphate. This chain is Arginine--tRNA ligase, found in Burkholderia thailandensis (strain ATCC 700388 / DSM 13276 / CCUG 48851 / CIP 106301 / E264).